The primary structure comprises 249 residues: Metal-staphylopine import system ATP-binding protein CntF (249 aa).

In terms of domain architecture, ABC transporter spans Ile-2 to Glu-244. Gly-42 to Ser-49 is an ATP binding site.

This sequence belongs to the ABC transporter superfamily. The complex is composed of two ATP-binding proteins (CntD and CntF), two transmembrane proteins (CntB and CntC) and a solute-binding protein (CntA).

The protein localises to the cell membrane. Its activity is regulated as follows. Nickel/cobalt import is reduced in the presence of zinc. Its function is as follows. Part of the ABC transporter complex CntABCDF (Opp1) involved in the uptake of metal in complex with the metallophore staphylopine (StP). Involved in the import of divalent metals ions such as nickel, cobalt and zinc. Probably responsible for energy coupling to the transport system. Plays a major role in nickel/cobalt import in zinc-depleted conditions. Contributes to virulence. Required for full urease activity in vitro. In Staphylococcus aureus (strain NCTC 8325 / PS 47), this protein is Metal-staphylopine import system ATP-binding protein CntF.